We begin with the raw amino-acid sequence, 159 residues long: Photosystem II extrinsic protein U, chloroplastic (159 aa).

It belongs to the PsbU family. As to quaternary structure, PSII is composed of 1 copy each of membrane proteins PsbA, PsbB, PsbC, PsbD, PsbE, PsbF, PsbH, PsbI, PsbJ, PsbK, PsbL, PsbM, PsbT, PsbX, PsbY, PsbZ, Psb30/Ycf12, at least 3 peripheral proteins of the oxygen-evolving complex and a large number of cofactors. It forms dimeric complexes. Part of the oxygen-evolving complex of photosystem II.

It localises to the plastid. The protein resides in the chloroplast thylakoid membrane. Its function is as follows. One of the extrinsic, lumenal subunits of photosystem II (PSII). PSII is a light-driven water plastoquinone oxidoreductase, using light energy to abstract electrons from H(2)O, generating a proton gradient subsequently used for ATP formation. The extrinsic proteins stabilize the structure of photosystem II oxygen-evolving complex (OEC), the ion environment of oxygen evolution and protect the OEC against heat-induced inactivation. The protein is Photosystem II extrinsic protein U, chloroplastic of Karenia brevis (Red tide dinoflagellate).